The sequence spans 99 residues: Nucleoid-associated protein SSU98_0195 (99 aa).

The protein belongs to the YbaB/EbfC family. In terms of assembly, homodimer.

The protein localises to the cytoplasm. It localises to the nucleoid. Binds to DNA and alters its conformation. May be involved in regulation of gene expression, nucleoid organization and DNA protection. In Streptococcus suis (strain 98HAH33), this protein is Nucleoid-associated protein SSU98_0195.